Here is a 435-residue protein sequence, read N- to C-terminus: Serine hydroxymethyltransferase (435 aa).

(6S)-5,6,7,8-tetrahydrofolate contacts are provided by residues L131 and 135 to 137; that span reads GHL. K240 carries the N6-(pyridoxal phosphate)lysine modification.

It belongs to the SHMT family. In terms of assembly, homodimer. Pyridoxal 5'-phosphate is required as a cofactor.

The protein resides in the cytoplasm. It catalyses the reaction (6R)-5,10-methylene-5,6,7,8-tetrahydrofolate + glycine + H2O = (6S)-5,6,7,8-tetrahydrofolate + L-serine. Its pathway is one-carbon metabolism; tetrahydrofolate interconversion. The protein operates within amino-acid biosynthesis; glycine biosynthesis; glycine from L-serine: step 1/1. Catalyzes the reversible interconversion of serine and glycine with tetrahydrofolate (THF) serving as the one-carbon carrier. This reaction serves as the major source of one-carbon groups required for the biosynthesis of purines, thymidylate, methionine, and other important biomolecules. Also exhibits THF-independent aldolase activity toward beta-hydroxyamino acids, producing glycine and aldehydes, via a retro-aldol mechanism. The chain is Serine hydroxymethyltransferase from Bifidobacterium longum subsp. infantis (strain ATCC 15697 / DSM 20088 / JCM 1222 / NCTC 11817 / S12).